Consider the following 448-residue polypeptide: Glutamyl-tRNA reductase (448 aa).

Substrate contacts are provided by residues 49–52, Ser109, 114–116, and Gln120; these read TCNR and ETQ. Cys50 (nucleophile) is an active-site residue. 189-194 is an NADP(+) binding site; sequence GAGEMG.

The protein belongs to the glutamyl-tRNA reductase family. As to quaternary structure, homodimer.

It catalyses the reaction (S)-4-amino-5-oxopentanoate + tRNA(Glu) + NADP(+) = L-glutamyl-tRNA(Glu) + NADPH + H(+). The protein operates within porphyrin-containing compound metabolism; protoporphyrin-IX biosynthesis; 5-aminolevulinate from L-glutamyl-tRNA(Glu): step 1/2. Functionally, catalyzes the NADPH-dependent reduction of glutamyl-tRNA(Glu) to glutamate 1-semialdehyde (GSA). This chain is Glutamyl-tRNA reductase, found in Staphylococcus epidermidis (strain ATCC 12228 / FDA PCI 1200).